Reading from the N-terminus, the 431-residue chain is Pachytene checkpoint protein 2 homolog (431 aa).

An N-acetylmethionine modification is found at M1. 179–186 (GPPGTGKT) serves as a coordination point for ATP.

This sequence belongs to the AAA ATPase family. PCH2 subfamily. Specifically interacts with the ligand binding domain of the thyroid receptor (TR). This interaction does not require the presence of thyroid hormone for its interaction. Interacts with proteasome subunit PSMA8; to participate in meiosis progression during spermatogenesis.

Functionally, plays a key role in chromosome recombination and chromosome structure development during meiosis. Required at early steps in meiotic recombination that leads to non-crossovers pathways. Also needed for efficient completion of homologous synapsis by influencing crossover distribution along the chromosomes affecting both crossovers and non-crossovers pathways. Also required for development of higher-order chromosome structures and is needed for synaptonemal-complex formation. In males, required for efficient synapsis of the sex chromosomes and for sex body formation. Promotes early steps of the DNA double-strand breaks (DSBs) repair process upstream of the assembly of RAD51 complexes. Required for depletion of HORMAD1 and HORMAD2 from synapsed chromosomes. Plays a role in mitotic spindle assembly checkpoint (SAC) activation. This is Pachytene checkpoint protein 2 homolog (TRIP13) from Sus scrofa (Pig).